The sequence spans 403 residues: Acetylornithine aminotransferase (403 aa).

Residues 107 to 108 and phenylalanine 140 each bind pyridoxal 5'-phosphate; that span reads GA. Residue arginine 143 participates in N(2)-acetyl-L-ornithine binding. 225–228 contributes to the pyridoxal 5'-phosphate binding site; sequence DEVQ. N6-(pyridoxal phosphate)lysine is present on lysine 254. Serine 282 contacts N(2)-acetyl-L-ornithine. Threonine 283 provides a ligand contact to pyridoxal 5'-phosphate.

It belongs to the class-III pyridoxal-phosphate-dependent aminotransferase family. ArgD subfamily. Homodimer. Requires pyridoxal 5'-phosphate as cofactor.

Its subcellular location is the cytoplasm. The catalysed reaction is N(2)-acetyl-L-ornithine + 2-oxoglutarate = N-acetyl-L-glutamate 5-semialdehyde + L-glutamate. It functions in the pathway amino-acid biosynthesis; L-arginine biosynthesis; N(2)-acetyl-L-ornithine from L-glutamate: step 4/4. This Vibrio cholerae serotype O1 (strain ATCC 39315 / El Tor Inaba N16961) protein is Acetylornithine aminotransferase.